The sequence spans 158 residues: Protein OPG060 (158 aa).

This sequence belongs to the orthopoxvirus OPG058 family.

The protein is Protein OPG060 (OPG060) of Homo sapiens (Human).